A 411-amino-acid chain; its full sequence is Arginine deiminase (411 aa).

Cys401 functions as the Amidino-cysteine intermediate in the catalytic mechanism.

Belongs to the arginine deiminase family. Post-translationally, glycosylated.

It localises to the cytoplasm. The catalysed reaction is L-arginine + H2O = L-citrulline + NH4(+). The protein operates within amino-acid degradation; L-arginine degradation via ADI pathway; carbamoyl phosphate from L-arginine: step 1/2. The sequence is that of Arginine deiminase from Streptococcus pyogenes serotype M3 (strain ATCC BAA-595 / MGAS315).